The chain runs to 619 residues: Protein DFG16 (619 aa).

Position 1 (methionine 1) is a topological domain, extracellular. The chain crosses the membrane as a helical span at residues 2–22 (IIRLHFYYLLTLVYHLGLVGA). At 23–167 (YEKAARKRIQ…KDPFPLGMIM (145 aa)) the chain is on the cytoplasmic side. Residues 33-54 (PPDLIPGPPGHKLGDERPPHYD) form a disordered region. The segment covering 44–54 (KLGDERPPHYD) has biased composition (basic and acidic residues). A helical membrane pass occupies residues 168–188 (ITFASGCICVATWMLFLVVLL). Over 189-203 (LPSDNHNRRNKVVHV) the chain is Extracellular. A helical membrane pass occupies residues 204-224 (YVLFSAIIRTVFLNETIAVIF). Over 225–291 (DSQYHDDYQD…IPFKMKKGTH (67 aa)) the chain is Cytoplasmic. The chain crosses the membrane as a helical span at residues 292–312 (IIITVGCFLSLADNILFANLL). At 313-321 (WRKNLVVLK) the chain is on the extracellular side. The chain crosses the membrane as a helical span at residues 322–342 (VFYKLIELLIYTIFISIICYF). Residues 343–378 (TWHNFAYILLPKTAEINTDGKCKTKLRILWENYHET) are Cytoplasmic-facing. Residues 379–399 (IPLLAYNILIFILFYFTTIFF) form a helical membrane-spanning segment. The Extracellular portion of the chain corresponds to 400-410 (AAFTKHVRGWT). Residues 411-431 (FNFVHLLKVLITVNVWGLIGV) traverse the membrane as a helical segment. Residues 432–619 (LEKRELHISK…NHIYNYENSD (188 aa)) lie on the Cytoplasmic side of the membrane. Composition is skewed to polar residues over residues 485-504 (KSNT…SPTW) and 526-549 (KFGQ…TLSK). Disordered stretches follow at residues 485-506 (KSNT…TWKS) and 520-586 (IMKS…ADKH). Positions 552 to 561 (QLLRKPRRKT) are enriched in basic residues.

It is found in the membrane. In terms of biological role, involved in invasion during filamentous growth. This Saccharomyces cerevisiae (strain ATCC 204508 / S288c) (Baker's yeast) protein is Protein DFG16 (DFG16).